The chain runs to 538 residues: 2-isopropylmalate synthase (538 aa).

Positions 6 to 277 (LIIFDTTLRD…DSTVPLSTID (272 aa)) constitute a Pyruvate carboxyltransferase domain. Residues Asp-15, His-206, His-208, and Asn-242 each contribute to the Mn(2+) site. The interval 406–538 (RLEQVQVSCG…AHPDAAAQKL (133 aa)) is regulatory domain.

The protein belongs to the alpha-IPM synthase/homocitrate synthase family. LeuA type 1 subfamily. As to quaternary structure, homodimer. The cofactor is Mn(2+).

The protein resides in the cytoplasm. The catalysed reaction is 3-methyl-2-oxobutanoate + acetyl-CoA + H2O = (2S)-2-isopropylmalate + CoA + H(+). The protein operates within amino-acid biosynthesis; L-leucine biosynthesis; L-leucine from 3-methyl-2-oxobutanoate: step 1/4. Catalyzes the condensation of the acetyl group of acetyl-CoA with 3-methyl-2-oxobutanoate (2-ketoisovalerate) to form 3-carboxy-3-hydroxy-4-methylpentanoate (2-isopropylmalate). The polypeptide is 2-isopropylmalate synthase (Gloeobacter violaceus (strain ATCC 29082 / PCC 7421)).